The following is a 237-amino-acid chain: UPF0173 metal-dependent hydrolase BOV_A0561 (237 aa).

It belongs to the UPF0173 family.

This is UPF0173 metal-dependent hydrolase BOV_A0561 from Brucella ovis (strain ATCC 25840 / 63/290 / NCTC 10512).